We begin with the raw amino-acid sequence, 383 residues long: Chromatin structure-remodeling complex subunit SFH1 (383 aa).

Residues 61–80 (DDDEKVHSDNGKGEGEEVGH) are disordered. Positions 64–80 (EKVHSDNGKGEGEEVGH) are enriched in basic and acidic residues.

The protein belongs to the SNF5 family.

It localises to the nucleus. Its function is as follows. Part of the chromatin structure-remodeling complex (RSC) which is involved in transcription regulation and nucleosome positioning. RSC is responsible for the transfer of a histone octamer from a nucleosome core particle to naked DNA. The reaction requires ATP and involves an activated RSC-nucleosome intermediate. Remodeling reaction also involves DNA translocation, DNA twist and conformational change. As a reconfigurer of centromeric and flanking nucleosomes, RSC complex is required both for proper kinetochore function in chromosome segregation and, via a PKC1-dependent signaling pathway, for organization of the cellular cytoskeleton. This subunit is essential for mitotic growth and required for cell cycle progression. The chain is Chromatin structure-remodeling complex subunit SFH1 (SFH1) from Eremothecium gossypii (strain ATCC 10895 / CBS 109.51 / FGSC 9923 / NRRL Y-1056) (Yeast).